The chain runs to 748 residues: 5-methyltetrahydropteroyltriglutamate--homocysteine methyltransferase (748 aa).

Residue Lys111 participates in 5-methyltetrahydropteroyltri-L-glutamate binding. Residues Ile428–Ser430 and Glu478 each bind L-homocysteine. Residues Ile428–Ser430 and Glu478 each bind L-methionine. 5-methyltetrahydropteroyltri-L-glutamate is bound by residues Arg509–Cys510 and Trp555. Asp593 lines the L-homocysteine pocket. An L-methionine-binding site is contributed by Asp593. Position 599 (Glu599) interacts with 5-methyltetrahydropteroyltri-L-glutamate. The Zn(2+) site is built by His635, Cys637, and Glu659. The Proton donor role is filled by His687. Cys719 lines the Zn(2+) pocket.

Belongs to the vitamin-B12 independent methionine synthase family. Requires Zn(2+) as cofactor.

The catalysed reaction is 5-methyltetrahydropteroyltri-L-glutamate + L-homocysteine = tetrahydropteroyltri-L-glutamate + L-methionine. The protein operates within amino-acid biosynthesis; L-methionine biosynthesis via de novo pathway; L-methionine from L-homocysteine (MetE route): step 1/1. Its function is as follows. Catalyzes the transfer of a methyl group from 5-methyltetrahydrofolate to homocysteine resulting in methionine formation. This is 5-methyltetrahydropteroyltriglutamate--homocysteine methyltransferase from Herpetosiphon aurantiacus (strain ATCC 23779 / DSM 785 / 114-95).